Consider the following 284-residue polypeptide: Bifunctional protein FolD (284 aa).

Residues 166–168 (GAS) and Ile-232 each bind NADP(+).

Belongs to the tetrahydrofolate dehydrogenase/cyclohydrolase family. Homodimer.

It carries out the reaction (6R)-5,10-methylene-5,6,7,8-tetrahydrofolate + NADP(+) = (6R)-5,10-methenyltetrahydrofolate + NADPH. The catalysed reaction is (6R)-5,10-methenyltetrahydrofolate + H2O = (6R)-10-formyltetrahydrofolate + H(+). The protein operates within one-carbon metabolism; tetrahydrofolate interconversion. Its function is as follows. Catalyzes the oxidation of 5,10-methylenetetrahydrofolate to 5,10-methenyltetrahydrofolate and then the hydrolysis of 5,10-methenyltetrahydrofolate to 10-formyltetrahydrofolate. The chain is Bifunctional protein FolD from Shewanella halifaxensis (strain HAW-EB4).